Reading from the N-terminus, the 119-residue chain is Non-specific lipid-transfer protein 11 (119 aa).

The N-terminal stretch at 1–28 (MRNITTTTRKMLLLVITILLGIAYHGEA) is a signal peptide. 4 cysteine pairs are disulfide-bonded: Cys31–Cys78, Cys41–Cys55, Cys56–Cys101, and Cys76–Cys115.

Belongs to the plant LTP family.

Plant non-specific lipid-transfer proteins transfer phospholipids as well as galactolipids across membranes. May play a role in wax or cutin deposition in the cell walls of expanding epidermal cells and certain secretory tissues. This chain is Non-specific lipid-transfer protein 11 (LTP11), found in Arabidopsis thaliana (Mouse-ear cress).